The chain runs to 232 residues: Zinc-finger homeodomain protein 5 (232 aa).

Positions 1 to 11 (MELSEHEEDAG) are enriched in acidic residues. The interval 1 to 25 (MELSEHEEDAGDVGGGCSSPPTPPH) is disordered. The segment at 40 to 86 (YHECLRNHAAASGGHVVDGCGEFMPASTEEPLACAACGCHRSFHRRD) adopts a ZF-HD dimerization-type; degenerate zinc-finger fold. Positions 126-170 (GLPFPGYGTPSGGTGTTTASSSDERLRPSPVQPRRRSRTTFTREQ) are disordered. Residues 159 to 222 (RRRSRTTFTR…NNKHSFKQKQ (64 aa)) constitute a DNA-binding region (homeobox).

Homo- and heterodimer with other ZFHD proteins.

The protein resides in the nucleus. Functionally, putative transcription factor. In Oryza sativa subsp. japonica (Rice), this protein is Zinc-finger homeodomain protein 5 (ZHD5).